The following is a 538-amino-acid chain: Guanine nucleotide-binding protein-like 3 (538 aa).

The segment covering 1 to 45 (MKRPKLKKASKRMTCHKRYKIQKKVREHHRKLRKEAKKRGHKKPK) has biased composition (basic residues). The tract at residues 1–125 (MKRPKLKKAS…KAKSGKQNPK (125 aa)) is disordered. Positions 2 to 46 (KRPKLKKASKRMTCHKRYKIQKKVREHHRKLRKEAKKRGHKKPKK) are basic. The stretch at 54 to 95 (APFKEALLREAELRKQQLEELKQQQKLDRQKEQERKRKLEIS) forms a coiled coil. The segment covering 59–94 (ALLREAELRKQQLEELKQQQKLDRQKEQERKRKLEI) has biased composition (basic and acidic residues). The residue at position 79 (lysine 79) is an N6-acetyllysine. A Glycyl lysine isopeptide (Lys-Gly) (interchain with G-Cter in SUMO2) cross-link involves residue lysine 91. Residues serine 95 and serine 101 each carry the phosphoserine modification. Residues 95–110 (SPDDEQSNVETQEESD) are compositionally biased toward acidic residues. Residues 115-125 (KKAKSGKQNPK) are compositionally biased toward basic residues. The 179-residue stretch at 129-307 (CQELKKVIEA…IIDSPCFIIS (179 aa)) folds into the CP-type G domain. 176-179 (NKSD) serves as a coordination point for GTP. Glycyl lysine isopeptide (Lys-Gly) (interchain with G-Cter in SUMO2) cross-links involve residues lysine 177, lysine 248, lysine 262, and lysine 270. 256 to 263 (GFPNVGKS) serves as a coordination point for GTP. The tract at residues 277–451 (VGVSMGLTRS…HLTNKILFRS (175 aa)) is intermediate. 300–303 (DSPC) serves as a coordination point for GTP. Composition is skewed to basic and acidic residues over residues 460-473 (EEKDIPEESPKQTE) and 481-491 (QEHVTGEKNAE). An acidic region spans residues 460 to 532 (EEKDIPEESP…KMSEEDDAYD (73 aa)). The disordered stretch occupies residues 460–538 (EEKDIPEESP…DAYDFTTDYI (79 aa)). 3 positions are modified to phosphoserine: serine 493, serine 505, and serine 518. Positions 514 to 524 (PSDRSFILDKM) are enriched in basic and acidic residues.

Belongs to the TRAFAC class YlqF/YawG GTPase family. Interacts with MDM2; this interaction stabilizes MDM2. Interaction with MDM2 occurs in the nucleoplasm and is triggered by a nucleolar release mechanism, such as mitosis-induced nucleolar disassembly. May interact with p53/TP53 via its basic domain. This interaction is most probably indirect and mediated by MDM2-binding. Expressed in testis.

The protein resides in the nucleus. The protein localises to the nucleolus. In terms of biological role, may be required to maintain the proliferative capacity of stem cells. Stabilizes MDM2 by preventing its ubiquitination, and hence proteasomal degradation. The chain is Guanine nucleotide-binding protein-like 3 (Gnl3) from Rattus norvegicus (Rat).